We begin with the raw amino-acid sequence, 132 residues long: Agouti-signaling protein (132 aa).

The N-terminal stretch at 1–22 (MDVTRLLLATLLVFLCFFTAYS) is a signal peptide. N-linked (GlcNAc...) asparagine glycosylation is present at asparagine 39. Residues 61–87 (QISRKEAEKKRSSKKEASMKKVARPRT) are disordered. The span at 63–79 (SRKEAEKKRSSKKEASM) shows a compositional bias: basic and acidic residues. Cystine bridges form between cysteine 93/cysteine 108, cysteine 100/cysteine 114, cysteine 107/cysteine 125, cysteine 111/cysteine 132, and cysteine 116/cysteine 123. An Agouti domain is found at 93–132 (CVATRDSCKPPAPACCDPCASCQCRFFRSACSCRVLSLNC).

Its subcellular location is the secreted. Involved in the regulation of melanogenesis. The binding of ASP to MC1R precludes alpha-MSH initiated signaling and thus blocks production of cAMP, leading to a down-regulation of eumelanogenesis (brown/black pigment) and thus increasing synthesis of pheomelanin (yellow/red pigment). The protein is Agouti-signaling protein (ASIP) of Macaca maura (Moor macaque).